Consider the following 341-residue polypeptide: Glyceraldehyde-3-phosphate dehydrogenase 1 (341 aa).

NAD(+)-binding positions include 13–14 (RI), Asp-35, and Lys-85. D-glyceraldehyde 3-phosphate contacts are provided by residues 157–159 (SCT), Thr-188, 217–218 (TG), and Arg-240. Cys-158 (nucleophile) is an active-site residue. Asn-322 is a binding site for NAD(+).

This sequence belongs to the glyceraldehyde-3-phosphate dehydrogenase family. Homotetramer.

It is found in the cytoplasm. It catalyses the reaction D-glyceraldehyde 3-phosphate + phosphate + NAD(+) = (2R)-3-phospho-glyceroyl phosphate + NADH + H(+). The protein operates within carbohydrate degradation; glycolysis; pyruvate from D-glyceraldehyde 3-phosphate: step 1/5. The sequence is that of Glyceraldehyde-3-phosphate dehydrogenase 1 (gpd-1) from Caenorhabditis elegans.